We begin with the raw amino-acid sequence, 272 residues long: Ribosomal RNA small subunit methyltransferase A (272 aa).

Positions 18, 20, 45, 66, 91, and 113 each coordinate S-adenosyl-L-methionine.

It belongs to the class I-like SAM-binding methyltransferase superfamily. rRNA adenine N(6)-methyltransferase family. RsmA subfamily.

It localises to the cytoplasm. It carries out the reaction adenosine(1518)/adenosine(1519) in 16S rRNA + 4 S-adenosyl-L-methionine = N(6)-dimethyladenosine(1518)/N(6)-dimethyladenosine(1519) in 16S rRNA + 4 S-adenosyl-L-homocysteine + 4 H(+). Specifically dimethylates two adjacent adenosines (A1518 and A1519) in the loop of a conserved hairpin near the 3'-end of 16S rRNA in the 30S particle. May play a critical role in biogenesis of 30S subunits. This is Ribosomal RNA small subunit methyltransferase A from Photorhabdus laumondii subsp. laumondii (strain DSM 15139 / CIP 105565 / TT01) (Photorhabdus luminescens subsp. laumondii).